Consider the following 177-residue polypeptide: Peptide methionine sulfoxide reductase MsrA (177 aa).

Cysteine 12 is an active-site residue.

Belongs to the MsrA Met sulfoxide reductase family.

It carries out the reaction L-methionyl-[protein] + [thioredoxin]-disulfide + H2O = L-methionyl-(S)-S-oxide-[protein] + [thioredoxin]-dithiol. The enzyme catalyses [thioredoxin]-disulfide + L-methionine + H2O = L-methionine (S)-S-oxide + [thioredoxin]-dithiol. Functionally, has an important function as a repair enzyme for proteins that have been inactivated by oxidation. Catalyzes the reversible oxidation-reduction of methionine sulfoxide in proteins to methionine. This chain is Peptide methionine sulfoxide reductase MsrA, found in Halobacterium salinarum (strain ATCC 29341 / DSM 671 / R1).